Here is a 221-residue protein sequence, read N- to C-terminus: GTP-binding nuclear protein Ran-2 (221 aa).

The Small GTPase Ran-type domain maps to 10-174 (DYPSFKLVIV…LYLARKLAGD (165 aa)). A GTP-binding site is contributed by 21–28 (DGGTGKTT). Residues 40–48 (KKYEPTIGV) form a switch-I region. Residues Gly71, 125–128 (NKVD), and 153–155 (SAK) each bind GTP. The segment at 71–87 (GQEKFGGLRDGYYIHGQ) is switch-II. Residues 202-212 (ADLAAAAAQPL) show a composition bias toward low complexity. Residues 202–221 (ADLAAAAAQPLPDDDDDAFE) form a disordered region.

Belongs to the small GTPase superfamily. Ran family. In terms of assembly, found in a nuclear export complex with RanGTP, exportin and pre-miRNA. Interacts with RanBP1a and RanBP1b. Interacts with PHRIP1. Interacts with KPNB1. Binds to PHIP1.

The protein localises to the nucleus. It localises to the nucleus envelope. Its function is as follows. GTP-binding protein involved in nucleocytoplasmic transport. Required for the import of protein into the nucleus and also for RNA export. Involved in chromatin condensation and control of cell cycle. The chain is GTP-binding nuclear protein Ran-2 from Arabidopsis thaliana (Mouse-ear cress).